Reading from the N-terminus, the 512-residue chain is MFGGRQSNNKSNDSLEQLINRATDETLTNDNWQYILDVCDNISSNPEEGTKQGIKVVSSRLASKDANIILRTLSLLVAMAENCGSRMRQEIATTSFVQESLLKKFTDRRLHKTVKFRVAEVIKQLHDSFKTDPSLKPMTDAYNRLVNDYSQYSAETADGPAKPAKKERSRQDKKKEEDELQRVLKLSLQEYEREQTVKKSYLNNKPLPQAQNESQYQEQPRQQQQQQQVLQNQPMHSTPTGQQSTQSPAESQTIATVSKVRALYDLISYEPDELSFRKGDIITVIESVYRDWWRGSLVNGKTGIFPLNYVTPVVTKTPQELSRELDEENRLLAVDSKRIDKLLALLSSNPETINEDEITRLYGDIIPLRTSLGKFIDKYNVRKEELSVLNSQLNNEVKLYNDLMDSSISQRVTHQPSGMSMAPYPTGVASPTHSSFSQANPSMLHQQPTSSGFGNARGNSSNEYFHSQQVPPTSFNQQSQPHSQPQPPQQSGPQRHNTEFSNINNFPNVNNI.

In terms of domain architecture, VHS spans 22–153 (ATDETLTNDN…RLVNDYSQYS (132 aa)). Disordered regions lie at residues 153-180 (SAETADGPAKPAKKERSRQDKKKEEDEL) and 200-253 (SYLN…ESQT). The segment covering 164 to 180 (AKKERSRQDKKKEEDEL) has biased composition (basic and acidic residues). In terms of domain architecture, UIM spans 175–194 (KEEDELQRVLKLSLQEYERE). Over residues 215–233 (QYQEQPRQQQQQQQVLQNQ) the composition is skewed to low complexity. Polar residues predominate over residues 234–253 (PMHSTPTGQQSTQSPAESQT). The 61-residue stretch at 255–315 (ATVSKVRALY…PLNYVTPVVT (61 aa)) folds into the SH3 domain. The interval 411 to 512 (RVTHQPSGMS…INNFPNVNNI (102 aa)) is disordered. Polar residues predominate over residues 429 to 476 (ASPTHSSFSQANPSMLHQQPTSSGFGNARGNSSNEYFHSQQVPPTSFN). The span at 502–512 (NINNFPNVNNI) shows a compositional bias: low complexity.

Belongs to the STAM family. As to quaternary structure, component of the ESCRT-0 complex composed of HSE1 and VPS27.

The protein resides in the endosome membrane. In terms of biological role, component of the ESCRT-0 complex which is the sorting receptor for ubiquitinated cargo proteins at the multivesicular body (MVB). This Debaryomyces hansenii (strain ATCC 36239 / CBS 767 / BCRC 21394 / JCM 1990 / NBRC 0083 / IGC 2968) (Yeast) protein is Class E vacuolar protein-sorting machinery protein HSE1 (HSE1).